A 167-amino-acid chain; its full sequence is NAD(P)H-quinone oxidoreductase subunit I, chloroplastic (167 aa).

2 4Fe-4S ferredoxin-type domains span residues 55-84 (GRIH…VDWK) and 95-124 (LNYS…MTEE). 8 residues coordinate [4Fe-4S] cluster: C64, C67, C70, C74, C104, C107, C110, and C114.

This sequence belongs to the complex I 23 kDa subunit family. As to quaternary structure, NDH is composed of at least 16 different subunits, 5 of which are encoded in the nucleus. It depends on [4Fe-4S] cluster as a cofactor.

The protein resides in the plastid. Its subcellular location is the chloroplast thylakoid membrane. It catalyses the reaction a plastoquinone + NADH + (n+1) H(+)(in) = a plastoquinol + NAD(+) + n H(+)(out). It carries out the reaction a plastoquinone + NADPH + (n+1) H(+)(in) = a plastoquinol + NADP(+) + n H(+)(out). Functionally, NDH shuttles electrons from NAD(P)H:plastoquinone, via FMN and iron-sulfur (Fe-S) centers, to quinones in the photosynthetic chain and possibly in a chloroplast respiratory chain. The immediate electron acceptor for the enzyme in this species is believed to be plastoquinone. Couples the redox reaction to proton translocation, and thus conserves the redox energy in a proton gradient. This is NAD(P)H-quinone oxidoreductase subunit I, chloroplastic from Vitis vinifera (Grape).